The sequence spans 282 residues: UDP-3-O-acyl-N-acetylglucosamine deacetylase (282 aa).

Zn(2+)-binding residues include H81, H239, and D243. H266 (proton donor) is an active-site residue.

This sequence belongs to the LpxC family. It depends on Zn(2+) as a cofactor.

It carries out the reaction a UDP-3-O-[(3R)-3-hydroxyacyl]-N-acetyl-alpha-D-glucosamine + H2O = a UDP-3-O-[(3R)-3-hydroxyacyl]-alpha-D-glucosamine + acetate. It participates in glycolipid biosynthesis; lipid IV(A) biosynthesis; lipid IV(A) from (3R)-3-hydroxytetradecanoyl-[acyl-carrier-protein] and UDP-N-acetyl-alpha-D-glucosamine: step 2/6. Catalyzes the hydrolysis of UDP-3-O-myristoyl-N-acetylglucosamine to form UDP-3-O-myristoylglucosamine and acetate, the committed step in lipid A biosynthesis. The protein is UDP-3-O-acyl-N-acetylglucosamine deacetylase of Chlamydia pneumoniae (Chlamydophila pneumoniae).